Here is a 91-residue protein sequence, read N- to C-terminus: Small ribosomal subunit protein uS19 (91 aa).

This sequence belongs to the universal ribosomal protein uS19 family.

In terms of biological role, protein S19 forms a complex with S13 that binds strongly to the 16S ribosomal RNA. The sequence is that of Small ribosomal subunit protein uS19 from Aromatoleum aromaticum (strain DSM 19018 / LMG 30748 / EbN1) (Azoarcus sp. (strain EbN1)).